Consider the following 328-residue polypeptide: Sin3 histone deacetylase corepressor complex component SDS3 (328 aa).

Low complexity predominate over residues 1–16 (MSAAGLLAPAPAQAGA). Positions 1 to 65 (MSAAGLLAPA…DLAKHDEEDY (65 aa)) are disordered. Serine 2 bears the N-acetylserine mark. Residues 2–170 (SAAGLLAPAP…IENEKLTMEL (169 aa)) form a mediates interaction with USP17L2 region. Acidic residues-rich tracts occupy residues 23–37 (YPEE…EEDE) and 45–54 (SDEDTEDASE). Serine 32 and serine 45 each carry phosphoserine. Threonine 49 is subject to Phosphothreonine. Serine 53 is modified (phosphoserine). Positions 56 to 65 (DLAKHDEEDY) are enriched in basic and acidic residues. The stretch at 66–171 (VEMKEQMYQD…ENEKLTMELT (106 aa)) forms a coiled coil. Glycyl lysine isopeptide (Lys-Gly) (interchain with G-Cter in SUMO2) cross-links involve residues lysine 69, lysine 178, and lysine 201. A sin3 interaction domain (SID) region spans residues 188 to 226 (RPNDPVPIPDKRRKPAPAQLNYLLTDEQIMEDLRTLNKL). The tract at residues 226–252 (LKSPKRPASPSSPEHLPATPAESPAQR) is disordered. 3 positions are modified to phosphoserine: serine 228, serine 234, and serine 237. At threonine 244 the chain carries Phosphothreonine.

It belongs to the SDS3 family. As to quaternary structure, interacts with HCFC1. Homodimer. Component of the SIN3 histone deacetylase (HDAC) corepressor complex. Interacts with SIN3A. Interaction with SIN3B enhances the interaction between SIN3B and HDAC1 to form a complex. Component of a mSin3A corepressor complex that contains SIN3A, SAP130, SUDS3/SAP45, ARID4B/SAP180, HDAC1 and HDAC2. Interacts with USP17L2; the interaction is direct. Interacts with FOXK2. Post-translationally, polyubiquitinated. 'Lys-63'-polyubiquitinated SUDS3 positively regulates histone deacetylation. Regulated through deubiquitination by USP17L2/USP17 that cleaves 'Lys-63'-linked ubiquitin chains.

It is found in the nucleus. Its function is as follows. Regulatory protein which represses transcription and augments histone deacetylase activity of HDAC1. May have a potential role in tumor suppressor pathways through regulation of apoptosis. May function in the assembly and/or enzymatic activity of the mSin3A corepressor complex or in mediating interactions between the complex and other regulatory complexes. The sequence is that of Sin3 histone deacetylase corepressor complex component SDS3 (SUDS3) from Pongo abelii (Sumatran orangutan).